Reading from the N-terminus, the 3890-residue chain is Extracellular matrix-binding protein EbhB (3890 aa).

The signal sequence occupies residues 1 to 39; it reads MNYRDKIQKFSIRKYTVGTFSTVIATLVFLGFNTSQAHA. A compositionally biased stretch (polar residues) spans 41–59; the sequence is ETNQPASVVKQKQQSNNEQ. Disordered stretches follow at residues 41 to 152, 249 to 277, 1347 to 1372, and 2418 to 2438; these read ETNQ…GNDN, MPQRQQTSRRSNRIQTRSVESRAAEPRSV, NEKAQAEAGGRPNYRTTGYSQSNATT, and TITPKAGTGHSVSSNPSTLTA. Low complexity predominate over residues 65-78; that stretch reads SQVQNSQNSQNSQS. Positions 79–117 are enriched in polar residues; the sequence is LSATHENEQPNNSQANLVNQKVAQSSTTNDEQPASQNVN. The segment covering 130–140 has biased composition (basic and acidic residues); it reads PDKEESKHKQN. Composition is skewed to polar residues over residues 141–151, 250–266, 1360–1372, and 2427–2438; these read ESQSANKNGND, PQRQQTSRRSNRIQTRS, YRTTGYSQSNATT, and HSVSSNPSTLTA. FIVAR domains follow at residues 2524–2580, 2610–2666, 2687–2750, 2780–2836, 2864–2919, 2947–3002, 3030–3085, 3154–3212, 3280–3339, 3407–3465, 3533–3591, 3659–3717, and 3785–3843; these read AKNH…VSDA, SKNN…ISDE, DTHA…VQSA, AKTK…IAAE, AKTQ…IRQN, AKNQ…INTN, AKTQ…INDK, AMTK…VNQK, AMTG…VNNA, AMGN…VNRA, AMGN…VTEA, AMNT…ITQK, and AMAN…VEAA.

This is Extracellular matrix-binding protein EbhB (ebhB) from Staphylococcus aureus (strain N315).